The following is a 503-amino-acid chain: Anaerobic nitric oxide reductase flavorubredoxin (503 aa).

The zinc metallo-hydrolase stretch occupies residues 30 to 210 (LQGSSYNSYL…PFSRLVTAKI (181 aa)). Residues His79, Glu81, Asp83, His147, Asp166, and His227 each coordinate Fe cation. The 140-residue stretch at 254 to 393 (ITLFYDTMSN…ICREHGREIA (140 aa)) folds into the Flavodoxin-like domain. Residues 260–264 (TMSNN) and 342–369 (AFGS…ETTL) each bind FMN. Positions 451–502 (NGCMQCSVCQWIYDPALGEPMQDVTPGTMWSDVPDSFLCPECGLGKDVFNPI) constitute a Rubredoxin-like domain. Residues Cys456, Cys459, Cys489, and Cys492 each coordinate Fe cation.

This sequence in the N-terminal section; belongs to the zinc metallo-hydrolase group 3 family. Homotetramer. Fe cation serves as cofactor. It depends on FMN as a cofactor.

Its subcellular location is the cytoplasm. It functions in the pathway nitrogen metabolism; nitric oxide reduction. Its function is as follows. Anaerobic nitric oxide reductase; uses NADH to detoxify nitric oxide (NO), protecting several 4Fe-4S NO-sensitive enzymes. Has at least 2 reductase partners, only one of which (NorW, flavorubredoxin reductase) has been identified. NO probably binds to the di-iron center; electrons enter from the NorW at rubredoxin and are transferred sequentially to the FMN center and the di-iron center. Also able to function as an aerobic oxygen reductase. The polypeptide is Anaerobic nitric oxide reductase flavorubredoxin (Pectobacterium carotovorum subsp. carotovorum (strain PC1)).